Consider the following 379-residue polypeptide: Chaperone protein DnaJ (379 aa).

In terms of domain architecture, J spans 5 to 69; it reads EYYERLGVDK…QKRAAYDQYG (65 aa). Residues 141–223 form a CR-type zinc finger; it reads GVEKQVKYNR…CHGSGHEKVA (83 aa). Residues Cys-154, Cys-157, Cys-171, Cys-174, Cys-197, Cys-200, Cys-211, and Cys-214 each coordinate Zn(2+). CXXCXGXG motif repeat units follow at residues 154–161, 171–178, 197–204, and 211–218; these read CHTCGGSG, CHKCGGRG, CDVCHGTG, and CTTCHGSG.

The protein belongs to the DnaJ family. Homodimer. The cofactor is Zn(2+).

The protein localises to the cytoplasm. Its function is as follows. Participates actively in the response to hyperosmotic and heat shock by preventing the aggregation of stress-denatured proteins and by disaggregating proteins, also in an autonomous, DnaK-independent fashion. Unfolded proteins bind initially to DnaJ; upon interaction with the DnaJ-bound protein, DnaK hydrolyzes its bound ATP, resulting in the formation of a stable complex. GrpE releases ADP from DnaK; ATP binding to DnaK triggers the release of the substrate protein, thus completing the reaction cycle. Several rounds of ATP-dependent interactions between DnaJ, DnaK and GrpE are required for fully efficient folding. Also involved, together with DnaK and GrpE, in the DNA replication of plasmids through activation of initiation proteins. The sequence is that of Chaperone protein DnaJ from Lactococcus lactis subsp. cremoris (strain MG1363).